Consider the following 137-residue polypeptide: MQGTISCARNYNMTTTVGESLRPLSLKTQGNGERVRMVVEENAVIVIGRRGCCMCHVVRRLLLGLGVNPAVLEIDEEREDEVLSELENIGVQGGGGTVKLPAVYVGGRLFGGLDRVMATHISGELVPILKEVGALWL.

Residues 32–136 form the Glutaredoxin domain; the sequence is GERVRMVVEE…PILKEVGALW (105 aa). C52 and C55 are oxidised to a cystine. The short motif at 134 to 137 is the Responsive for interaction with TGA factors element; that stretch reads ALWL.

The protein belongs to the glutaredoxin family. CC-type subfamily. Interacts with TGA2 and TGA6.

Its subcellular location is the cytoplasm. It localises to the nucleus. In terms of biological role, has a glutathione-disulfide oxidoreductase activity in the presence of NADPH and glutathione reductase. Reduces low molecular weight disulfides and proteins. The chain is Glutaredoxin-C9 (GRXC9) from Arabidopsis thaliana (Mouse-ear cress).